The chain runs to 122 residues: uncharacterized protein (122 aa).

Residues 1–15 (MAEPGGRGDYHKDGR) show a composition bias toward basic and acidic residues. The tract at residues 1 to 26 (MAEPGGRGDYHKDGRPPSLSRSPLFT) is disordered.

This is an uncharacterized protein from Macaca fascicularis (Crab-eating macaque).